The primary structure comprises 179 residues: Small heat shock protein hspK (179 aa).

The 147-residue stretch at 32 to 178 (HRINIWRPTV…DRLKIPIQSK (147 aa)) folds into the sHSP domain. The interval 80–122 (KKSKGGLNNLPSSSSSINSDSTTNTNTNTTTTTTTAPPPPSDA) is disordered. Residues 87-114 (NNLPSSSSSINSDSTTNTNTNTTTTTTT) show a composition bias toward low complexity.

This sequence belongs to the small heat shock protein (HSP20) family.

In Dictyostelium discoideum (Social amoeba), this protein is Small heat shock protein hspK (hspK).